The sequence spans 105 residues: Small ribosomal subunit protein uS10 (105 aa).

Belongs to the universal ribosomal protein uS10 family. Part of the 30S ribosomal subunit.

Its function is as follows. Involved in the binding of tRNA to the ribosomes. This chain is Small ribosomal subunit protein uS10, found in Synechocystis sp. (strain ATCC 27184 / PCC 6803 / Kazusa).